The sequence spans 201 residues: MAAQGARHGLQVRERCGVADTIVSGMAGRYATALFELATEAGAVDSVKADLDRLSALIAESADLARLVKSPVFSAEEQLKAISAVLDQAGISGLAGNFVRRVAQNRRLFALPRMVADYASLVAAMRGETTAQVTVPAPLSDAHFFALKDALAQQTGKDVILDVTVDPSILGGLIVKLGSRMVDASLKTKLNSIRHAMKEVR.

The protein belongs to the ATPase delta chain family. F-type ATPases have 2 components, F(1) - the catalytic core - and F(0) - the membrane proton channel. F(1) has five subunits: alpha(3), beta(3), gamma(1), delta(1), epsilon(1). F(0) has three main subunits: a(1), b(2) and c(10-14). The alpha and beta chains form an alternating ring which encloses part of the gamma chain. F(1) is attached to F(0) by a central stalk formed by the gamma and epsilon chains, while a peripheral stalk is formed by the delta and b chains.

The protein resides in the cell inner membrane. Its function is as follows. F(1)F(0) ATP synthase produces ATP from ADP in the presence of a proton or sodium gradient. F-type ATPases consist of two structural domains, F(1) containing the extramembraneous catalytic core and F(0) containing the membrane proton channel, linked together by a central stalk and a peripheral stalk. During catalysis, ATP synthesis in the catalytic domain of F(1) is coupled via a rotary mechanism of the central stalk subunits to proton translocation. Functionally, this protein is part of the stalk that links CF(0) to CF(1). It either transmits conformational changes from CF(0) to CF(1) or is implicated in proton conduction. This is ATP synthase subunit delta from Xanthobacter autotrophicus (strain ATCC BAA-1158 / Py2).